Here is a 166-residue protein sequence, read N- to C-terminus: NAD(P)H-quinone oxidoreductase subunit I, chloroplastic (166 aa).

2 4Fe-4S ferredoxin-type domains span residues 55 to 84 (GRIHFEFDKCIACEVCVRVCPIDLPVVDWK) and 95 to 124 (LNYSIDFGICIFCGNCVEYCPTNCLSMTEE). 8 residues coordinate [4Fe-4S] cluster: Cys64, Cys67, Cys70, Cys74, Cys104, Cys107, Cys110, and Cys114.

It belongs to the complex I 23 kDa subunit family. As to quaternary structure, NDH is composed of at least 16 different subunits, 5 of which are encoded in the nucleus. The cofactor is [4Fe-4S] cluster.

Its subcellular location is the plastid. The protein resides in the chloroplast thylakoid membrane. The catalysed reaction is a plastoquinone + NADH + (n+1) H(+)(in) = a plastoquinol + NAD(+) + n H(+)(out). It carries out the reaction a plastoquinone + NADPH + (n+1) H(+)(in) = a plastoquinol + NADP(+) + n H(+)(out). NDH shuttles electrons from NAD(P)H:plastoquinone, via FMN and iron-sulfur (Fe-S) centers, to quinones in the photosynthetic chain and possibly in a chloroplast respiratory chain. The immediate electron acceptor for the enzyme in this species is believed to be plastoquinone. Couples the redox reaction to proton translocation, and thus conserves the redox energy in a proton gradient. The sequence is that of NAD(P)H-quinone oxidoreductase subunit I, chloroplastic from Palafoxia arida (Spanish needles).